The primary structure comprises 98 residues: NADH-ubiquinone oxidoreductase chain 4L (98 aa).

3 helical membrane passes run 1-21 (MSLT…GLLL), 29-49 (SLLC…MIIL), and 61-81 (IILL…LVMV).

This sequence belongs to the complex I subunit 4L family. In terms of assembly, core subunit of respiratory chain NADH dehydrogenase (Complex I) which is composed of 45 different subunits.

It localises to the mitochondrion inner membrane. It catalyses the reaction a ubiquinone + NADH + 5 H(+)(in) = a ubiquinol + NAD(+) + 4 H(+)(out). Core subunit of the mitochondrial membrane respiratory chain NADH dehydrogenase (Complex I) which catalyzes electron transfer from NADH through the respiratory chain, using ubiquinone as an electron acceptor. Part of the enzyme membrane arm which is embedded in the lipid bilayer and involved in proton translocation. This is NADH-ubiquinone oxidoreductase chain 4L (MT-ND4L) from Platyrrhinus brachycephalus (Short-headed broad-nosed bat).